We begin with the raw amino-acid sequence, 136 residues long: Small ribosomal subunit protein uS8c (136 aa).

It belongs to the universal ribosomal protein uS8 family. As to quaternary structure, part of the 30S ribosomal subunit.

Its subcellular location is the plastid. The protein resides in the chloroplast. One of the primary rRNA binding proteins, it binds directly to 16S rRNA central domain where it helps coordinate assembly of the platform of the 30S subunit. In Hordeum vulgare (Barley), this protein is Small ribosomal subunit protein uS8c (rps8).